A 584-amino-acid chain; its full sequence is ATP-dependent lipid A-core flippase (584 aa).

Transmembrane regions (helical) follow at residues 18–38 (LWPI…TLIL), 65–85 (VFVW…FSGF), 155–175 (IIGL…ILVL), 252–272 (IFDP…LYAA), and 277–297 (VMEM…IVLM). One can recognise an ABC transmembrane type-1 domain in the interval 30-312 (VVASITLILN…LTNVSAQFQR (283 aa)). The 237-residue stretch at 344–580 (IIFDDVTFFY…QGIYAQLYKL (237 aa)) folds into the ABC transporter domain. 378–385 (GRSGSGKS) lines the ATP pocket.

The protein belongs to the ABC transporter superfamily. Lipid exporter (TC 3.A.1.106) family. Homodimer.

The protein localises to the cell inner membrane. It catalyses the reaction ATP + H2O + lipid A-core oligosaccharideSide 1 = ADP + phosphate + lipid A-core oligosaccharideSide 2.. In terms of biological role, involved in lipopolysaccharide (LPS) biosynthesis. Translocates lipid A-core from the inner to the outer leaflet of the inner membrane. Transmembrane domains (TMD) form a pore in the inner membrane and the ATP-binding domain (NBD) is responsible for energy generation. The chain is ATP-dependent lipid A-core flippase from Blochmanniella pennsylvanica (strain BPEN).